The primary structure comprises 556 residues: Formate--tetrahydrofolate ligase (556 aa).

65–72 contacts ATP; that stretch reads TPAGEGKS.

It belongs to the formate--tetrahydrofolate ligase family.

It carries out the reaction (6S)-5,6,7,8-tetrahydrofolate + formate + ATP = (6R)-10-formyltetrahydrofolate + ADP + phosphate. It functions in the pathway one-carbon metabolism; tetrahydrofolate interconversion. This Streptococcus equi subsp. zooepidemicus (strain H70) protein is Formate--tetrahydrofolate ligase.